The chain runs to 120 residues: uncharacterized protein (120 aa).

A signal peptide spans 1 to 16 (MFKFILLCFCINFAFS).

This is an uncharacterized protein from Acheta domesticus (House cricket).